We begin with the raw amino-acid sequence, 250 residues long: Small ribosomal subunit protein uS3 (250 aa).

Residues 39–109 (IRNYVQARLK…EVKIDVVEVI (71 aa)) enclose the KH type-2 domain. Residues 225–239 (INERRGDSKSRPRDP) are compositionally biased toward basic and acidic residues. The segment at 225 to 250 (INERRGDSKSRPRDPRNKRRRRTKRS) is disordered. The segment covering 240–250 (RNKRRRRTKRS) has biased composition (basic residues).

Belongs to the universal ribosomal protein uS3 family. In terms of assembly, part of the 30S ribosomal subunit. Forms a tight complex with proteins S10 and S14.

Binds the lower part of the 30S subunit head. Binds mRNA in the 70S ribosome, positioning it for translation. The sequence is that of Small ribosomal subunit protein uS3 from Chlorobium phaeobacteroides (strain DSM 266 / SMG 266 / 2430).